A 98-amino-acid polypeptide reads, in one-letter code: Cytochrome c-552 (98 aa).

Residues 1-18 (MKKFLLVAVVGLAGITFA) form the signal peptide. Positions 28, 31, 32, and 77 each coordinate heme c.

This sequence belongs to the cytochrome c family. In terms of processing, binds 1 heme c group covalently per subunit.

Its function is as follows. Reacts with hydrogenase. This Hydrogenobacter thermophilus (strain DSM 6534 / IAM 12695 / TK-6) protein is Cytochrome c-552.